A 415-amino-acid polypeptide reads, in one-letter code: Multidrug resistance protein MdtA (415 aa).

The signal sequence occupies residues 1 to 21 (MKGSYKSRWVIVIVVVIAAIA). Positions 31 to 47 (DSQSAAPGATKQAQQSP) are enriched in polar residues. 2 disordered regions span residues 31-60 (DSQS…GPLA) and 392-415 (EAQS…GARS). Residues 399–415 (SEEKATSREYAKKGARS) are compositionally biased toward basic and acidic residues.

Belongs to the membrane fusion protein (MFP) (TC 8.A.1) family. Part of a tripartite efflux system composed of MdtA, MdtB and MdtC.

The protein localises to the cell inner membrane. Functionally, the MdtABC tripartite complex confers resistance against novobiocin and deoxycholate. This Escherichia coli O139:H28 (strain E24377A / ETEC) protein is Multidrug resistance protein MdtA.